A 311-amino-acid polypeptide reads, in one-letter code: HPr kinase/phosphorylase (311 aa).

Active-site residues include H139 and K160. ATP is bound at residue 154–161 (GASGVGKS). S161 serves as a coordination point for Mg(2+). D178 acts as the Proton acceptor; for phosphorylation activity. Proton donor; for dephosphorylation activity in catalysis. The segment at 202 to 211 (LEIRGIGIID) is important for the catalytic mechanism of both phosphorylation and dephosphorylation. Residue E203 participates in Mg(2+) binding. R244 is a catalytic residue. Residues 265 to 270 (PVRPGR) form an important for the catalytic mechanism of dephosphorylation region.

The protein belongs to the HPrK/P family. In terms of assembly, homohexamer. It depends on Mg(2+) as a cofactor.

It carries out the reaction [HPr protein]-L-serine + ATP = [HPr protein]-O-phospho-L-serine + ADP + H(+). The catalysed reaction is [HPr protein]-O-phospho-L-serine + phosphate + H(+) = [HPr protein]-L-serine + diphosphate. In terms of biological role, catalyzes the ATP- as well as the pyrophosphate-dependent phosphorylation of a specific serine residue in HPr, a phosphocarrier protein of the phosphoenolpyruvate-dependent sugar phosphotransferase system (PTS). HprK/P also catalyzes the pyrophosphate-producing, inorganic phosphate-dependent dephosphorylation (phosphorolysis) of seryl-phosphorylated HPr (P-Ser-HPr). The two antagonistic activities of HprK/P are regulated by several intracellular metabolites, which change their concentration in response to the absence or presence of rapidly metabolisable carbon sources (glucose, fructose, etc.) in the growth medium. Therefore, by controlling the phosphorylation state of HPr, HPrK/P is a sensor enzyme that plays a major role in the regulation of carbon metabolism and sugar transport: it mediates carbon catabolite repression (CCR), and regulates PTS-catalyzed carbohydrate uptake and inducer exclusion. This Exiguobacterium sibiricum (strain DSM 17290 / CCUG 55495 / CIP 109462 / JCM 13490 / 255-15) protein is HPr kinase/phosphorylase.